A 321-amino-acid chain; its full sequence is Protein translocase subunit SecF (321 aa).

Helical transmembrane passes span 23-43, 158-178, 189-209, 217-237, 258-280, and 290-312; these read VWLI…FSWT, LQTT…YISI, LLAL…LGII, LFAV…VVVF, FAVS…PLIA, and YWFA…ALVP.

Belongs to the SecD/SecF family. SecF subfamily. In terms of assembly, forms a complex with SecD. Part of the essential Sec protein translocation apparatus which comprises SecA, SecYEG and auxiliary proteins SecDF. Other proteins may also be involved.

It is found in the cell inner membrane. Functionally, part of the Sec protein translocase complex. Interacts with the SecYEG preprotein conducting channel. SecDF uses the proton motive force (PMF) to complete protein translocation after the ATP-dependent function of SecA. In terms of biological role, probably participates in protein translocation into and across both the cytoplasmic and thylakoid membranes in cyanobacterial cells. In Prochlorococcus marinus (strain SARG / CCMP1375 / SS120), this protein is Protein translocase subunit SecF.